The following is a 513-amino-acid chain: ATP synthase subunit alpha (513 aa).

169-176 (GDRQIGKT) is an ATP binding site.

This sequence belongs to the ATPase alpha/beta chains family. As to quaternary structure, F-type ATPases have 2 components, CF(1) - the catalytic core - and CF(0) - the membrane proton channel. CF(1) has five subunits: alpha(3), beta(3), gamma(1), delta(1), epsilon(1). CF(0) has three main subunits: a(1), b(2) and c(9-12). The alpha and beta chains form an alternating ring which encloses part of the gamma chain. CF(1) is attached to CF(0) by a central stalk formed by the gamma and epsilon chains, while a peripheral stalk is formed by the delta and b chains.

The protein resides in the cell inner membrane. It catalyses the reaction ATP + H2O + 4 H(+)(in) = ADP + phosphate + 5 H(+)(out). Its function is as follows. Produces ATP from ADP in the presence of a proton gradient across the membrane. The alpha chain is a regulatory subunit. The sequence is that of ATP synthase subunit alpha from Shewanella halifaxensis (strain HAW-EB4).